Here is a 201-residue protein sequence, read N- to C-terminus: 3-isopropylmalate dehydratase small subunit (201 aa).

It belongs to the LeuD family. LeuD type 1 subfamily. In terms of assembly, heterodimer of LeuC and LeuD.

The enzyme catalyses (2R,3S)-3-isopropylmalate = (2S)-2-isopropylmalate. It functions in the pathway amino-acid biosynthesis; L-leucine biosynthesis; L-leucine from 3-methyl-2-oxobutanoate: step 2/4. Catalyzes the isomerization between 2-isopropylmalate and 3-isopropylmalate, via the formation of 2-isopropylmaleate. This chain is 3-isopropylmalate dehydratase small subunit, found in Escherichia coli O45:K1 (strain S88 / ExPEC).